We begin with the raw amino-acid sequence, 124 residues long: Small ribosomal subunit protein uS12cy (124 aa).

It belongs to the universal ribosomal protein uS12 family. Part of the 30S ribosomal subunit.

It localises to the plastid. Its subcellular location is the chloroplast. In terms of biological role, with S4 and S5 plays an important role in translational accuracy. Located at the interface of the 30S and 50S subunits. The sequence is that of Small ribosomal subunit protein uS12cy (rps12-B) from Olimarabidopsis pumila (Dwarf rocket).